The sequence spans 449 residues: Glucose-6-phosphate isomerase (449 aa).

Glu-291 (proton donor) is an active-site residue. Catalysis depends on residues His-312 and Lys-426.

This sequence belongs to the GPI family.

The protein localises to the cytoplasm. It carries out the reaction alpha-D-glucose 6-phosphate = beta-D-fructose 6-phosphate. The protein operates within carbohydrate biosynthesis; gluconeogenesis. It functions in the pathway carbohydrate degradation; glycolysis; D-glyceraldehyde 3-phosphate and glycerone phosphate from D-glucose: step 2/4. Its function is as follows. Catalyzes the reversible isomerization of glucose-6-phosphate to fructose-6-phosphate. This chain is Glucose-6-phosphate isomerase, found in Streptococcus gordonii (strain Challis / ATCC 35105 / BCRC 15272 / CH1 / DL1 / V288).